The sequence spans 64 residues: Large ribosomal subunit protein bL28 (64 aa).

The segment at 1-27 (MAKRDQLTGKGPLSGNTRSHAMNHSKR) is disordered.

It belongs to the bacterial ribosomal protein bL28 family.

This Ureaplasma parvum serovar 3 (strain ATCC 27815 / 27 / NCTC 11736) protein is Large ribosomal subunit protein bL28.